Here is an 819-residue protein sequence, read N- to C-terminus: THO complex subunit 5B (819 aa).

A disordered region spans residues 285–332 (ARQQSRKDSGMSSNTESSRLEDDGPDDDDDGQRRRKRPKKLTSKEGSD).

Belongs to the THOC5 family. As to quaternary structure, component of the THO complex, which is composed of THO1, THO2, THO3, THO5, THO6 and THO7.

It localises to the nucleus. Its function is as follows. Acts as a component of the THO subcomplex of the TREX complex which is thought to couple mRNA transcription, processing and nuclear export. This chain is THO complex subunit 5B (THO5B), found in Arabidopsis thaliana (Mouse-ear cress).